Reading from the N-terminus, the 566-residue chain is Proline--tRNA ligase (566 aa).

This sequence belongs to the class-II aminoacyl-tRNA synthetase family. ProS type 1 subfamily. Homodimer.

It is found in the cytoplasm. It catalyses the reaction tRNA(Pro) + L-proline + ATP = L-prolyl-tRNA(Pro) + AMP + diphosphate. Catalyzes the attachment of proline to tRNA(Pro) in a two-step reaction: proline is first activated by ATP to form Pro-AMP and then transferred to the acceptor end of tRNA(Pro). As ProRS can inadvertently accommodate and process non-cognate amino acids such as alanine and cysteine, to avoid such errors it has two additional distinct editing activities against alanine. One activity is designated as 'pretransfer' editing and involves the tRNA(Pro)-independent hydrolysis of activated Ala-AMP. The other activity is designated 'posttransfer' editing and involves deacylation of mischarged Ala-tRNA(Pro). The misacylated Cys-tRNA(Pro) is not edited by ProRS. This chain is Proline--tRNA ligase, found in Bacillus cytotoxicus (strain DSM 22905 / CIP 110041 / 391-98 / NVH 391-98).